Consider the following 22-residue polypeptide: Peptide PGLa-BM3 (22 aa).

Leu-22 carries the leucine amide modification.

As to expression, expressed by the skin glands.

Its subcellular location is the secreted. Its function is as follows. Antimicrobial peptide. The polypeptide is Peptide PGLa-BM3 (Xenopus boumbaensis (Mawa clawed frog)).